The sequence spans 95 residues: Nucleoid-associated protein MARTH_orf159 (95 aa).

The protein belongs to the YbaB/EbfC family. In terms of assembly, homodimer.

The protein localises to the cytoplasm. It localises to the nucleoid. Its function is as follows. Binds to DNA and alters its conformation. May be involved in regulation of gene expression, nucleoid organization and DNA protection. The sequence is that of Nucleoid-associated protein MARTH_orf159 from Metamycoplasma arthritidis (strain 158L3-1) (Mycoplasma arthritidis).